A 129-amino-acid polypeptide reads, in one-letter code: Small ribosomal subunit protein uS9 (129 aa).

The protein belongs to the universal ribosomal protein uS9 family.

This Helicobacter pylori (strain P12) protein is Small ribosomal subunit protein uS9.